Reading from the N-terminus, the 360-residue chain is DNA replication and repair protein RecF (360 aa).

An ATP-binding site is contributed by Gly30–Thr37.

This sequence belongs to the RecF family.

It localises to the cytoplasm. Its function is as follows. The RecF protein is involved in DNA metabolism; it is required for DNA replication and normal SOS inducibility. RecF binds preferentially to single-stranded, linear DNA. It also seems to bind ATP. The chain is DNA replication and repair protein RecF from Acinetobacter baumannii (strain SDF).